The primary structure comprises 793 residues: Probable phosphoketolase 2 (793 aa).

Belongs to the XFP family. Thiamine diphosphate serves as cofactor.

The chain is Probable phosphoketolase 2 from Nostoc sp. (strain PCC 7120 / SAG 25.82 / UTEX 2576).